We begin with the raw amino-acid sequence, 39 residues long: Cytochrome b6-f complex subunit 5 (39 aa).

Residues 5-25 traverse the membrane as a helical segment; the sequence is LLCGIVLGLVPITLLGLFVSA.

Belongs to the PetG family. In terms of assembly, the 4 large subunits of the cytochrome b6-f complex are cytochrome b6, subunit IV (17 kDa polypeptide, PetD), cytochrome f and the Rieske protein, while the 4 small subunits are PetG, PetL, PetM and PetN. The complex functions as a dimer.

It localises to the cellular thylakoid membrane. Component of the cytochrome b6-f complex, which mediates electron transfer between photosystem II (PSII) and photosystem I (PSI), cyclic electron flow around PSI, and state transitions. PetG is required for either the stability or assembly of the cytochrome b6-f complex. This Prochlorococcus marinus (strain MIT 9515) protein is Cytochrome b6-f complex subunit 5.